The following is a 115-amino-acid chain: Large ribosomal subunit protein bL21 (115 aa).

Belongs to the bacterial ribosomal protein bL21 family. Part of the 50S ribosomal subunit. Contacts protein L20.

Functionally, this protein binds to 23S rRNA in the presence of protein L20. The protein is Large ribosomal subunit protein bL21 of Picosynechococcus sp. (strain ATCC 27264 / PCC 7002 / PR-6) (Agmenellum quadruplicatum).